The following is a 37-amino-acid chain: Chorion class CB protein PCH12 (37 aa).

The tract at residues Asp-1–Glu-26 is central domain. The right arm stretch occupies residues Thr-27–Ala-37.

Belongs to the chorion protein family.

In terms of biological role, this protein is one of many from the eggshell of the silk moth. In Antheraea polyphemus (Polyphemus moth), this protein is Chorion class CB protein PCH12.